Reading from the N-terminus, the 179-residue chain is Large ribosomal subunit protein uL6 (179 aa).

This sequence belongs to the universal ribosomal protein uL6 family. Part of the 50S ribosomal subunit.

Its function is as follows. This protein binds to the 23S rRNA, and is important in its secondary structure. It is located near the subunit interface in the base of the L7/L12 stalk, and near the tRNA binding site of the peptidyltransferase center. In Desulfovibrio desulfuricans (strain ATCC 27774 / DSM 6949 / MB), this protein is Large ribosomal subunit protein uL6.